Here is a 796-residue protein sequence, read N- to C-terminus: Kinesin-like protein KIF3C (796 aa).

The region spanning 10 to 367 (ALKVVARCRP…LRFANRAKNI (358 aa)) is the Kinesin motor domain. 97–104 (GQTGTGKT) is a binding site for ATP. 3 disordered regions span residues 251 to 292 (ERQN…PKEA), 397 to 421 (EKKGMLGKRPRRKSSRRKKAVSAPA), and 754 to 796 (PSTS…VDHD). Positions 270–284 (AGGGGGGGGTSGSGS) are enriched in gly residues. Residues 378 to 632 (KDTLLREFQE…NEQTRELKLK (255 aa)) adopt a coiled-coil conformation. Residues 401-416 (MLGKRPRRKSSRRKKA) show a composition bias toward basic residues. The tract at residues 633–793 (YLIIENFIPP…SAPLHPATVV (161 aa)) is globular.

The protein belongs to the TRAFAC class myosin-kinesin ATPase superfamily. Kinesin family. Kinesin II subfamily. Heterodimer of KIF3A and KIF3C.

It localises to the cytoplasm. It is found in the cytoskeleton. Functionally, microtubule-based anterograde translocator for membranous organelles. This is Kinesin-like protein KIF3C (Kif3c) from Rattus norvegicus (Rat).